Here is a 401-residue protein sequence, read N- to C-terminus: uncharacterized protein (401 aa).

This is an uncharacterized protein from Mycobacterium tuberculosis (strain CDC 1551 / Oshkosh).